The following is a 195-amino-acid chain: Thymidine kinase (195 aa).

ATP is bound by residues 15 to 22 and 91 to 94; these read GSMFSGKT and DEAN. The Proton acceptor role is filled by Glu92. The Zn(2+) site is built by Cys148, Cys151, Cys186, and Cys189.

The protein belongs to the thymidine kinase family. As to quaternary structure, homotetramer.

It is found in the cytoplasm. The catalysed reaction is thymidine + ATP = dTMP + ADP + H(+). The chain is Thymidine kinase from Halobacterium salinarum (strain ATCC 29341 / DSM 671 / R1).